Here is a 447-residue protein sequence, read N- to C-terminus: SNF1-related protein kinase regulatory subunit gamma-1-like (447 aa).

A2 is subject to N-acetylalanine. S35 carries the post-translational modification Phosphoserine. CBS domains are found at residues 54-120 (QVPG…SAEL), 214-275 (SFRW…GRDW), 292-350 (MSPN…PEVF), and 374-433 (LAIP…PNYF).

It belongs to the 5'-AMP-activated protein kinase gamma subunit family. Subunit of a probable heterotrimeric complex consisting of an alpha catalytic (KIN10 or KIN11) subunit, and a beta (KINB) and a gamma (KING or SNF4) non-catalytic regulatory subunits.

Its function is as follows. Regulatory subunit of the probable trimeric SNF1-related protein kinase (SnRK) complex, which may play a role in a signal transduction cascade regulating gene expression and carbohydrate metabolism in higher plants. The sequence is that of SNF1-related protein kinase regulatory subunit gamma-1-like (CBSCBS2) from Arabidopsis thaliana (Mouse-ear cress).